A 536-amino-acid chain; its full sequence is MAERDHYHTIDDPNVPCNFYDTVNLTGHRLFPNGSYDYYGTIVPAELVGTYDYIHSSLTERIEVREHVRGCVCKFKSCLNICCPWRQVFNSEVDGCIIDHTDNRTWPDPPMLNITFRNESTILVNMFTQFAIQSFRPCPKMFSLQPETSSWDDYLLFENGSMLRVDDKLLIRKNEFCMVPTYVNESDMFYTIHPANCDMQDDHSTVKIINSYAMMFSIPFMMLTIAVYLLIPELRNQHGKSLVCYLIGLTVGYSSLCYVQLYQVDATGVTCKVFGYTAYFFFMGAYMWLSVISFDLWHNFRGTRGINRFQEKKRFLFYSLYSWGIALVFLAFTYCAQQLSNLPDNLKPGIGDGVYCWLDMSNWAAMIYFYGPILAIVVANTIMFIMTAIKIHGVQREMARIIASENSTKNLRTEKDKFGLFLRLFLIMGITWLTELISYFVGSDKGWSKLFYISDLANAMQGFLIFMLFVMKKKVKHLITNRCSSVRDGSNQRQSQYSTKTTSSSVANLSLHEKPSVEKPLVISSSVDPQKTTIFR.

Cystine bridges form between Cys17–Cys71, Cys73–Cys78, Cys82–Cys177, Cys83–Cys96, and Cys138–Cys197. N-linked (GlcNAc...) asparagine glycosylation is found at Asn24 and Asn33. Asn103, Asn113, Asn118, Asn159, and Asn184 each carry an N-linked (GlcNAc...) asparagine glycan. Residues 212-232 (YAMMFSIPFMMLTIAVYLLIP) traverse the membrane as a helical segment. Topologically, residues 233–241 (ELRNQHGKS) are cytoplasmic. The helical transmembrane segment at 242-262 (LVCYLIGLTVGYSSLCYVQLY) threads the bilayer. Topologically, residues 263–273 (QVDATGVTCKV) are extracellular. Residues 274-294 (FGYTAYFFFMGAYMWLSVISF) traverse the membrane as a helical segment. Topologically, residues 295–314 (DLWHNFRGTRGINRFQEKKR) are cytoplasmic. A helical membrane pass occupies residues 315–335 (FLFYSLYSWGIALVFLAFTYC). Over 336 to 365 (AQQLSNLPDNLKPGIGDGVYCWLDMSNWAA) the chain is Extracellular. The chain crosses the membrane as a helical span at residues 366 to 386 (MIYFYGPILAIVVANTIMFIM). Topologically, residues 387 to 417 (TAIKIHGVQREMARIIASENSTKNLRTEKDK) are cytoplasmic. A helical transmembrane segment spans residues 418–438 (FGLFLRLFLIMGITWLTELIS). At 439–449 (YFVGSDKGWSK) the chain is on the extracellular side. The helical transmembrane segment at 450–470 (LFYISDLANAMQGFLIFMLFV) threads the bilayer. Residues 471-536 (MKKKVKHLIT…VDPQKTTIFR (66 aa)) are Cytoplasmic-facing. The disordered stretch occupies residues 487 to 506 (RDGSNQRQSQYSTKTTSSSV). The segment covering 492–505 (QRQSQYSTKTTSSS) has biased composition (low complexity).

This sequence belongs to the G-protein coupled receptor 2 family. Mth subfamily. As to quaternary structure, homodimer.

Its subcellular location is the cell membrane. Its function is as follows. Involved in biological aging and stress response. Essential for adult survival. The protein is G-protein coupled receptor Mth2 (mth2) of Drosophila simulans (Fruit fly).